The chain runs to 406 residues: 2,3-bisphosphoglycerate-independent phosphoglycerate mutase (406 aa).

It belongs to the BPG-independent phosphoglycerate mutase family. A-PGAM subfamily.

It catalyses the reaction (2R)-2-phosphoglycerate = (2R)-3-phosphoglycerate. The protein operates within carbohydrate degradation; glycolysis; pyruvate from D-glyceraldehyde 3-phosphate: step 3/5. In terms of biological role, catalyzes the interconversion of 2-phosphoglycerate and 3-phosphoglycerate. This Methanococcus maripaludis (strain DSM 14266 / JCM 13030 / NBRC 101832 / S2 / LL) protein is 2,3-bisphosphoglycerate-independent phosphoglycerate mutase.